The primary structure comprises 255 residues: tRNA (guanine-N(7)-)-methyltransferase (255 aa).

The tract at residues 1–29 (MSDSDASRPSAIASDGPDAAGKHASGAPW) is disordered. S-adenosyl-L-methionine-binding residues include Glu-86, Glu-111, Asp-138, and Asp-160. Residue Asp-160 is part of the active site. Substrate is bound by residues Lys-164, Asp-196, and 233-236 (TRYE).

Belongs to the class I-like SAM-binding methyltransferase superfamily. TrmB family.

It carries out the reaction guanosine(46) in tRNA + S-adenosyl-L-methionine = N(7)-methylguanosine(46) in tRNA + S-adenosyl-L-homocysteine. It functions in the pathway tRNA modification; N(7)-methylguanine-tRNA biosynthesis. Its function is as follows. Catalyzes the formation of N(7)-methylguanine at position 46 (m7G46) in tRNA. The chain is tRNA (guanine-N(7)-)-methyltransferase from Ruegeria sp. (strain TM1040) (Silicibacter sp.).